We begin with the raw amino-acid sequence, 909 residues long: ABC transporter A family member 10 (909 aa).

The next 7 membrane-spanning stretches (helical) occupy residues 35-55 (VLVP…LDVV), 320-340 (IASM…FPVI), 374-394 (FLTL…AIGL), 406-426 (FIFY…ASSI), 433-453 (ATVV…FLFG), 465-485 (GILA…YEFA), and 507-527 (LFYL…SIDL). Position 555 is a phosphoserine (S555). Residues 587-824 (IVCDNLKKVY…YGGSYVFTMT (238 aa)) form the ABC transporter domain. Residue 625 to 632 (GPNGAGKT) participates in ATP binding.

It belongs to the ABC transporter superfamily. ABCA family. CPR flippase (TC 3.A.1.211) subfamily.

It localises to the membrane. The protein is ABC transporter A family member 10 (ABCA10) of Arabidopsis thaliana (Mouse-ear cress).